The primary structure comprises 307 residues: Protoheme IX farnesyltransferase (307 aa).

8 helical membrane passes run 24-44, 52-72, 115-135, 152-172, 179-199, 224-244, 245-265, and 284-304; these read ISLLKPRVMSLVIFTALVGLV, PVIAFTAILCIAVGAGAAGAL, VVLGLLVNVLAGALLAFTIFF, IVIGGLSGALPPMVAWAAASG, VILVAIIFFWTPPHFWALSLY, QILLYTLFLVPLALSPVMLGE, AGLAYGVVAGVTGLGMLLLAV, and FGFSILYLFLLFATLLAEALV.

This sequence belongs to the UbiA prenyltransferase family. Protoheme IX farnesyltransferase subfamily.

The protein resides in the cell inner membrane. It catalyses the reaction heme b + (2E,6E)-farnesyl diphosphate + H2O = Fe(II)-heme o + diphosphate. Its pathway is porphyrin-containing compound metabolism; heme O biosynthesis; heme O from protoheme: step 1/1. Functionally, converts heme B (protoheme IX) to heme O by substitution of the vinyl group on carbon 2 of heme B porphyrin ring with a hydroxyethyl farnesyl side group. This is Protoheme IX farnesyltransferase from Azorhizobium caulinodans (strain ATCC 43989 / DSM 5975 / JCM 20966 / LMG 6465 / NBRC 14845 / NCIMB 13405 / ORS 571).